A 756-amino-acid chain; its full sequence is Catalase-peroxidase (756 aa).

Residues 91–244 (WHSAGTYRTG…LAAVQMGLIY (154 aa)) constitute a cross-link (tryptophyl-tyrosyl-methioninium (Trp-Tyr) (with M-270)). H92 (proton acceptor) is an active-site residue. Positions 198–230 (AQKKMQQPGDGTLVAEPENHANEESRTASGERN) are disordered. A compositionally biased stretch (basic and acidic residues) spans 214 to 223 (PENHANEESR). Residues 244–270 (YVNPEGPEGVPDPVASARDIRETFGRM) constitute a cross-link (tryptophyl-tyrosyl-methioninium (Tyr-Met) (with W-91)). H285 lines the heme b pocket. Positions 371–390 (KNGAGAGKIPDAHDPSKRHA) are disordered.

It belongs to the peroxidase family. Peroxidase/catalase subfamily. As to quaternary structure, homodimer or homotetramer. Requires heme b as cofactor. Post-translationally, formation of the three residue Trp-Tyr-Met cross-link is important for the catalase, but not the peroxidase activity of the enzyme.

The enzyme catalyses H2O2 + AH2 = A + 2 H2O. It catalyses the reaction 2 H2O2 = O2 + 2 H2O. In terms of biological role, bifunctional enzyme with both catalase and broad-spectrum peroxidase activity. This Pseudomonas syringae pv. tomato (strain ATCC BAA-871 / DC3000) protein is Catalase-peroxidase.